The following is an 852-amino-acid chain: Probable nitrite reductase-hydroxylamine oxidoreductase fusion protein (852 aa).

Positions Met1 to Ala27 are cleaved as a signal peptide. The nitrite reductase domain stretch occupies residues Asp28–Pro327. 2 consecutive Plastocyanin-like domains span residues Val72 to Pro169 and Gly217 to Gly307. Positions 102 and 145 each coordinate Cu cation. Residues Gly328–Gly827 form a hydroxylamine oxidoreductase domain region. Heme-binding residues include Cys406, Cys409, His410, His426, Cys463, Cys466, His467, His471, Cys483, Cys486, His487, His505, His537, Cys543, Cys546, His547, His550, Cys563, Cys566, His567, Cys614, Cys617, His618, Cys686, Cys689, His690, and His813.

The protein in the N-terminal section; belongs to the multicopper oxidase family. Cu cation serves as cofactor. The cofactor is heme.

Its subcellular location is the encapsulin nanocompartment. It catalyses the reaction hydroxylamine + 4 Fe(III)-[cytochrome c] + H2O = 4 Fe(II)-[cytochrome c] + nitrite + 5 H(+). The enzyme catalyses nitric oxide + Fe(III)-[cytochrome c] + H2O = Fe(II)-[cytochrome c] + nitrite + 2 H(+). Functionally, a nitrite reductase-hydroxylamine oxidoreductase protein that probably functions in the type 1 encapsulin nanocompartment. Probably involved in reductive catalysis. Targeted to the encapsulin nanocompartment by association with the diheme domain of the encapsulin shell protein (AC Q1Q6L7). Catalyzes the reduction of nitrite to nitric oxide (NO). Catalyzes the oxidation of hydroxylamine to nitrite. The sequence is that of Probable nitrite reductase-hydroxylamine oxidoreductase fusion protein from Kuenenia stuttgartiensis.